A 184-amino-acid chain; its full sequence is GTP-dependent dephospho-CoA kinase (184 aa).

GTP is bound by residues Asp33, Val34, Asp52, Lys54, and Glu103.

This sequence belongs to the GTP-dependent DPCK family.

It carries out the reaction 3'-dephospho-CoA + GTP = GDP + CoA + H(+). The protein operates within cofactor biosynthesis; coenzyme A biosynthesis. In terms of biological role, catalyzes the GTP-dependent phosphorylation of the 3'-hydroxyl group of dephosphocoenzyme A to form coenzyme A (CoA). This is GTP-dependent dephospho-CoA kinase from Ignicoccus hospitalis (strain KIN4/I / DSM 18386 / JCM 14125).